A 193-amino-acid chain; its full sequence is Phosphoheptose isomerase (193 aa).

Positions 37 to 193 (LADSFKAGGK…QLIEKEMVKA (157 aa)) constitute an SIS domain. 52 to 54 (NGG) serves as a coordination point for substrate. Zn(2+) contacts are provided by His61 and Glu65. Residues Glu65, 93–94 (ND), 119–121 (STS), Ser124, and Gln172 each bind substrate. The Zn(2+) site is built by Gln172 and His180.

This sequence belongs to the SIS family. GmhA subfamily. In terms of assembly, homotetramer. Requires Zn(2+) as cofactor.

It localises to the cytoplasm. The catalysed reaction is 2 D-sedoheptulose 7-phosphate = D-glycero-alpha-D-manno-heptose 7-phosphate + D-glycero-beta-D-manno-heptose 7-phosphate. It functions in the pathway carbohydrate biosynthesis; D-glycero-D-manno-heptose 7-phosphate biosynthesis; D-glycero-alpha-D-manno-heptose 7-phosphate and D-glycero-beta-D-manno-heptose 7-phosphate from sedoheptulose 7-phosphate: step 1/1. Functionally, catalyzes the isomerization of sedoheptulose 7-phosphate in D-glycero-D-manno-heptose 7-phosphate. This Yersinia enterocolitica serotype O:8 / biotype 1B (strain NCTC 13174 / 8081) protein is Phosphoheptose isomerase.